The chain runs to 274 residues: tRNA uridine(34) hydroxylase (274 aa).

One can recognise a Rhodanese domain in the interval 121 to 217 (SRSDVYTIDT…YFKSTKNTNN (97 aa)). Cysteine 177 acts as the Cysteine persulfide intermediate in catalysis.

The protein belongs to the TrhO family.

The enzyme catalyses uridine(34) in tRNA + AH2 + O2 = 5-hydroxyuridine(34) in tRNA + A + H2O. Its function is as follows. Catalyzes oxygen-dependent 5-hydroxyuridine (ho5U) modification at position 34 in tRNAs. This is tRNA uridine(34) hydroxylase from Ehrlichia canis (strain Jake).